Here is a 119-residue protein sequence, read N- to C-terminus: Fluoride-specific ion channel FluC (119 aa).

Transmembrane regions (helical) follow at residues 5-25, 30-50, 59-79, and 97-117; these read IIPL…LNLA, IPPA…IGIF, WKLL…GFSL, and IFLH…IGAA. Residues Gly69 and Thr72 each contribute to the Na(+) site.

Belongs to the fluoride channel Fluc/FEX (TC 1.A.43) family.

Its subcellular location is the cell inner membrane. The catalysed reaction is fluoride(in) = fluoride(out). With respect to regulation, na(+) is not transported, but it plays an essential structural role and its presence is essential for fluoride channel function. In terms of biological role, fluoride-specific ion channel. Important for reducing fluoride concentration in the cell, thus reducing its toxicity. In Neisseria meningitidis serogroup B (strain ATCC BAA-335 / MC58), this protein is Fluoride-specific ion channel FluC.